A 1203-amino-acid polypeptide reads, in one-letter code: Nitric oxide synthase 3 (1203 aa).

Positions 1–71 (MGNLKSVAQE…PPEGPKFPRV (71 aa)) are disordered. The N-myristoyl glycine moiety is linked to residue glycine 2. 2 S-palmitoyl cysteine lipidation sites follow: cysteine 15 and cysteine 26. Over residues 15–27 (CGLGLGLGLGLCG) the composition is skewed to gly residues. At threonine 33 the chain carries Phosphothreonine. Positions 33-66 (TPAPEPSRAPASLLPPAPEHSPPSSPLTQPPEGP) are enriched in pro residues. Zn(2+) is bound by residues cysteine 94 and cysteine 99. Residues 98–486 (RCLGSLVFPR…PDPWKGSAAK (389 aa)) are interaction with NOSIP. Position 102 (serine 102) interacts with (6R)-L-erythro-5,6,7,8-tetrahydrobiopterin. At serine 114 the chain carries Phosphoserine; by CDK5. Residue cysteine 184 coordinates heme b. L-arginine-binding residues include glutamine 247, tryptophan 356, tyrosine 357, and glutamate 361. Position 365 (arginine 365) interacts with (6R)-L-erythro-5,6,7,8-tetrahydrobiopterin. L-arginine is bound at residue asparagine 366. (6R)-L-erythro-5,6,7,8-tetrahydrobiopterin contacts are provided by alanine 446, tryptophan 447, and phenylalanine 460. Tyrosine 475 is a heme b binding site. Residues 491-510 (TRKKTFKEVANAVKISASLM) are calmodulin-binding. Threonine 495 carries the phosphothreonine; by AMPK modification. The 184-residue stretch at 520-703 (ATILYGSETG…AFRGWAQAAF (184 aa)) folds into the Flavodoxin-like domain. FMN contacts are provided by serine 526, glutamate 527, threonine 528, arginine 530, serine 572, and threonine 573. Serine 615, serine 633, and serine 638 each carry phosphoserine. Serine 654, cysteine 661, glutamate 687, and glutamine 691 together coordinate FMN. An FAD-binding FR-type domain is found at 756-1002 (RKMFQATIRS…IRGAPSFRLP (247 aa)). Arginine 776 serves as a coordination point for NADP(+). Histidine 798 is a binding site for FAD. Position 836 is a phosphoserine (serine 836). Residues arginine 938, tyrosine 940, serine 941, threonine 956, alanine 958, tyrosine 962, valine 975, cysteine 976, and serine 977 each contribute to the FAD site. 7 residues coordinate NADP(+): threonine 1016, arginine 1049, serine 1078, arginine 1079, lysine 1085, tyrosine 1087, and glutamine 1089. Threonine 1175 carries the phosphothreonine modification. Residue serine 1177 is modified to Phosphoserine; by AMPK. Position 1179 is a phosphoserine (serine 1179).

Belongs to the NOS family. In terms of assembly, homodimer. Interacts with NOSIP and NOSTRIN. Interacts with HSP90AB1. Forms a complex with ASL, ASS1 and SLC7A1; the complex regulates cell-autonomous L-arginine synthesis and citrulline recycling while channeling extracellular L-arginine to nitric oxide synthesis pathway. Heme b is required as a cofactor. It depends on FAD as a cofactor. FMN serves as cofactor. The cofactor is (6R)-L-erythro-5,6,7,8-tetrahydrobiopterin. Post-translationally, phosphorylation by AMPK at Ser-1177 in the presence of Ca(2+)-calmodulin (CaM) activates activity. In absence of Ca(2+)-calmodulin, AMPK also phosphorylates Thr-495, resulting in inhibition of activity. Phosphorylation of Ser-114 by CDK5 reduces activity. In terms of tissue distribution, platelets, placenta, liver and kidney.

The protein localises to the cell membrane. It localises to the membrane. The protein resides in the caveola. Its subcellular location is the cytoplasm. It is found in the cytoskeleton. The protein localises to the golgi apparatus. It carries out the reaction 2 L-arginine + 3 NADPH + 4 O2 + H(+) = 2 L-citrulline + 2 nitric oxide + 3 NADP(+) + 4 H2O. Its activity is regulated as follows. Stimulated by calcium/calmodulin. Inhibited by NOSIP and NOSTRIN. Functionally, produces nitric oxide (NO) which is implicated in vascular smooth muscle relaxation through a cGMP-mediated signal transduction pathway. NO mediates vascular endothelial growth factor (VEGF)-induced angiogenesis in coronary vessels and promotes blood clotting through the activation of platelets. Its function is as follows. Lacks eNOS activity, dominant-negative form that may down-regulate eNOS activity by forming heterodimers with isoform 1. The sequence is that of Nitric oxide synthase 3 from Homo sapiens (Human).